Here is a 506-residue protein sequence, read N- to C-terminus: uncharacterized protein (506 aa).

This sequence belongs to the Mg-chelatase subunits D/I family. ComM subfamily.

This is an uncharacterized protein from Salmonella typhimurium (strain LT2 / SGSC1412 / ATCC 700720).